Here is a 124-residue protein sequence, read N- to C-terminus: Small ribosomal subunit protein uS12 (124 aa).

A disordered region spans residues 1–25; that stretch reads MATINQLVRKPRQATTYKSASPALD. Aspartate 89 is subject to 3-methylthioaspartic acid.

Belongs to the universal ribosomal protein uS12 family. As to quaternary structure, part of the 30S ribosomal subunit. Contacts proteins S8 and S17. May interact with IF1 in the 30S initiation complex.

Functionally, with S4 and S5 plays an important role in translational accuracy. Its function is as follows. Interacts with and stabilizes bases of the 16S rRNA that are involved in tRNA selection in the A site and with the mRNA backbone. Located at the interface of the 30S and 50S subunits, it traverses the body of the 30S subunit contacting proteins on the other side and probably holding the rRNA structure together. The combined cluster of proteins S8, S12 and S17 appears to hold together the shoulder and platform of the 30S subunit. In Xanthomonas campestris pv. campestris (strain 8004), this protein is Small ribosomal subunit protein uS12.